A 294-amino-acid chain; its full sequence is HTH-type transcriptional activator AmpR (294 aa).

The region spanning 6–63 is the HTH lysR-type domain; that stretch reads IPLNSLRAFEAAARQLSFTKAAIELNVTHAAISQQVKALEQRLNCRLFIRISRGLVLT. Residues 23 to 42 constitute a DNA-binding region (H-T-H motif); that stretch reads FTKAAIELNVTHAAISQQVK.

This sequence belongs to the LysR transcriptional regulatory family.

It localises to the cytoplasm. Functionally, this protein is a positive regulator of gene expression of beta-lactamase (AmpC). This is HTH-type transcriptional activator AmpR (ampR) from Yersinia enterocolitica.